The following is a 419-amino-acid chain: MDALINLKDCKEYMTITINGNEHQIKLAGIIEDPYFCGKDVCTILGYKDKEQALRKRVKSKHKKSLSELFEKKLPVVTTGNFFLGTQNELSYHEGKSIYINEPGLYNLIMSSEAPFAEQFQDMVYEKILPSIRKYGSYSIEQKLSSAMEQLALKDKSEEELQIKLQEERIEKENAYMKLRSEAKRHKEQIKRTLEFNQATKQIEPLEYIYICTTEYYQQHHKFKVGGVQSFKDLKSRLTQYNSGESNSEAHFFIYVRKTVSYRSIEHIIKGLLSGFRENQSNELYIMHCDWLVKFLDAIMDGNAEFALLVNSNREQIALDTINKEPTILPPIKLEQIAYIRAGDEPRDLSSVLGQEMIDSIKEAIESFEPMDNTVKRKEFELHLLSKSPNVSLTGKRRDTWELTRQLGSSINPMWRYKY.

The Bro-N domain maps to Leu4–Gly136. Positions Gln150–Glu195 form a coiled coil.

Belongs to the IIV-6 201R/289L family.

The polypeptide is Putative Bro-N domain-containing protein 201R (Acheta domesticus (House cricket)).